A 112-amino-acid chain; its full sequence is Gonad-inhibiting hormone (112 aa).

The N-terminal stretch at 1 to 31 is a signal peptide; the sequence is MVTRVGSGFSVQRVWLLLVIVVVLCGSVTQQ. Cystine bridges form between cysteine 41/cysteine 78, cysteine 58/cysteine 74, and cysteine 61/cysteine 87. Residue alanine 109 is modified to Alanine amide.

As to expression, produced in the eyestalk X-organ sinus gland complex of male and female lobsters.

It is found in the secreted. In terms of biological role, inhibits vitellogenesis in female animals. Plays a prominent role in the regulation of reproduction/molting processes. This Homarus americanus (American lobster) protein is Gonad-inhibiting hormone.